Consider the following 827-residue polypeptide: Multiple RNA-binding domain-containing protein 1 (827 aa).

The 74-residue stretch at 5-78 (SRIFVKNLPP…SRISVDIAKP (74 aa)) folds into the RRM 1 domain. Disordered regions lie at residues 77–116 (KPIA…TAAA), 176–230 (AGLE…ATDD), and 256–299 (AASG…DPES). Residues 179–189 (EDGESDDEYED) are compositionally biased toward acidic residues. Low complexity-rich tracts occupy residues 208-225 (APLA…PVSL) and 256-270 (AASG…STSV). The span at 277–288 (KPEEHPAEDSRE) shows a compositional bias: basic and acidic residues. RRM domains lie at 308-384 (SRLF…PAAA), 489-560 (TTIL…KGPK), 599-682 (SSLF…ASHR), and 704-781 (TKLV…FAQA).

This sequence belongs to the RRM MRD1 family.

It is found in the nucleus. Functionally, involved in pre-rRNA processing. The polypeptide is Multiple RNA-binding domain-containing protein 1 (mrd-1) (Neurospora crassa (strain ATCC 24698 / 74-OR23-1A / CBS 708.71 / DSM 1257 / FGSC 987)).